Here is a 577-residue protein sequence, read N- to C-terminus: E3 ubiquitin protein ligase RIN3 (577 aa).

The next 6 membrane-spanning stretches (helical) occupy residues 3-23, 58-78, 120-140, 162-182, 191-211, and 272-292; these read ITYL…LQVW, TTIA…VLSL, GVLW…QALA, YSAL…SLMI, YLLL…ALLI, and YLHI…VLFL. The segment at 337-379 adopts an RING-type; atypical zinc-finger fold; sequence CAICREPMAKAKRLHCNHLFHLGCLRSWLDQGLNEVYSCPTCR. Positions 537-577 constitute a CUE domain; sequence SILAMAETVREVLPHVPDEIIFQDLQRTNSVSVTVNNLLQM.

Interacts (via C-terminus) with RPM1 (via N-terminus).

It is found in the membrane. The enzyme catalyses S-ubiquitinyl-[E2 ubiquitin-conjugating enzyme]-L-cysteine + [acceptor protein]-L-lysine = [E2 ubiquitin-conjugating enzyme]-L-cysteine + N(6)-ubiquitinyl-[acceptor protein]-L-lysine.. It functions in the pathway protein modification; protein ubiquitination. Its function is as follows. E3 ubiquitin protein ligase that acts as a positive regulator of RPM1- and RPS2-dependent hypersensitive response (HR), in association with RIN2. Probably not required for RPM1 degradation during HR. The protein is E3 ubiquitin protein ligase RIN3 (RIN3) of Arabidopsis thaliana (Mouse-ear cress).